We begin with the raw amino-acid sequence, 274 residues long: MIRLENVSYCYPDGTPALTNINLTIRKGEYLGIIGRNGSGKSTLALHLNGLRRPQKGKVIVKGIDAGDFSKLQEVRKIVGIVFQNPETQFIGRTVEEDLAFGPENLCLPPTEIRKRVDRALAEIKLEKYRHHSPKSLSGGQGQCVALAGVLTMEPECLVFDEVTSMLDPDSGETVLRRIKKLHEKGKTIVYTTHNLEELHVADRILVMDRGRIVLEGEPENVLSDPSLKDLGLTPPSLIELAEQLKKHEIEISWENTSSPSSFAEELCRLFLKT.

The ABC transporter domain occupies 2-235 (IRLENVSYCY…PSLKDLGLTP (234 aa)). 35–42 (GRNGSGKS) provides a ligand contact to ATP.

This sequence belongs to the ABC transporter superfamily.

It localises to the cell membrane. Functionally, probably part of an ABC transporter complex. Responsible for energy coupling to the transport system. In Methanosarcina mazei (strain ATCC BAA-159 / DSM 3647 / Goe1 / Go1 / JCM 11833 / OCM 88) (Methanosarcina frisia), this protein is Putative ABC transporter ATP-binding protein MM_1037.